The sequence spans 316 residues: Olfactory receptor 5AP2 (316 aa).

The Extracellular segment spans residues 1-34; the sequence is MRLMKEVRGRNQTEVTEFLLLGLSDNPDLQGVLF. A glycan (N-linked (GlcNAc...) asparagine) is linked at N11. Residues 35-55 traverse the membrane as a helical segment; sequence ALFLLIYMANMVGNLGMIVLI. A topological domain (cytoplasmic) is located at residue K56. The helical transmembrane segment at 57-77 threads the bilayer; that stretch reads IDLCLHTPMYFFLSSLSFVDA. At 78–104 the chain is on the extracellular side; sequence SYSSSVTPKMLVNLMAENKAISFHGCA. The cysteines at positions 103 and 195 are disulfide-linked. The chain crosses the membrane as a helical span at residues 105–125; sequence AQFYFFGSFLGTECFLLAMMA. Over 126-135 the chain is Cytoplasmic; it reads YDRYAAIWNP. The helical transmembrane segment at 136–156 threads the bilayer; it reads LLYPVLVSGRICFLLIATSFL. The Extracellular segment spans residues 157–210; the sequence is AGCGNAAIHTGMTFRLSFCGSNRINHFYCDTPPLLKLSCSDTHFNGIVIMAFSS. Residues 211 to 231 form a helical membrane-spanning segment; it reads FIVISCVMIVLISYLCIFIAV. The Cytoplasmic portion of the chain corresponds to 232-245; that stretch reads LKMPSLEGRHKAFS. A helical transmembrane segment spans residues 246-266; sequence TCASYLMAVTIFFGTILFMYL. The Extracellular segment spans residues 267 to 278; sequence RPTSSYSMEQDK. Residues 279–299 form a helical membrane-spanning segment; it reads VVSVFYTVIIPVLNPLIYSLK. The Cytoplasmic segment spans residues 300–316; the sequence is NKDVKKALKKILWKHIL.

Belongs to the G-protein coupled receptor 1 family.

The protein resides in the cell membrane. Odorant receptor. In Homo sapiens (Human), this protein is Olfactory receptor 5AP2.